The primary structure comprises 43 residues: Protein PsbN (43 aa).

The chain crosses the membrane as a helical span at residues 5 to 27 (TLVAISISGLLVSFTGYALYTAF).

It belongs to the PsbN family.

The protein localises to the plastid. It localises to the chloroplast thylakoid membrane. In terms of biological role, may play a role in photosystem I and II biogenesis. This is Protein PsbN from Houttuynia cordata (Chameleon plant).